A 603-amino-acid polypeptide reads, in one-letter code: MKEMSRYLWPKDSWGDKLRVLLAVGLLVGGKVLNVQVPFFFREIVDSLNVDIAATGGTVATVAGTMIFAYGASRIGAVVSQELRNAVFSSVAQKAIRRVATRTFGHLLNLDLNFHLSKQTGGLTRAIDRGTKGISFLLTSMVFHIVPTALEISMVCGILTYQFGWEFAAVTALTMSAYTAFTIWTTAWRTKFRRQANAADNKASTVAVDSLINYEAVKYFNNEKYEIGRYDKALHQYEKSSIKVATSLAFLNSGQNIIFSSALTIMMWLGAKGIVAGSLSVGDLVLINQLVFQLSVPLNFLGSVYRELRQSLLDMETLFNLQKVNLSIKEKPNAASLVLPKGGEIRFDNVSFGYYPDRPILNNLSVTIPAGKKVAVVGPSGCGKSTLLRLLFRSYDPQSGRIFIDDQDIRDVSLDSLRRSIGVVPQDTPLFNDTVELNIRYGNLDASREKVLEAARRAHIHDKIESWPHGYQTKVGERGLMISGGEKQRLAVSRLILKDPPLLFFDEATSALDTHTEQALMSNINEVLKEKRRTSVFVAHRLRTIYDADVIIVLKEGRVVEMGSHRELMEGNGLYTELWMAQEMSMHDQSLGRSEREAPVPVK.

Residues 20–41 (VLLAVGLLVGGKVLNVQVPFFF) form a helical membrane-spanning segment. An ABC transmembrane type-1 domain is found at 20–310 (VLLAVGLLVG…LGSVYRELRQ (291 aa)). Over 42–64 (REIVDSLNVDIAATGGTVATVAG) the chain is Mitochondrial intermembrane. Residues 65–88 (TMIFAYGASRIGAVVSQELRNAVF) form a helical membrane-spanning segment. The Mitochondrial matrix segment spans residues 89–137 (SSVAQKAIRRVATRTFGHLLNLDLNFHLSKQTGGLTRAIDRGTKGISFL). The chain crosses the membrane as a helical span at residues 138–161 (LTSMVFHIVPTALEISMVCGILTY). Glutamine 162 is a topological domain (mitochondrial intermembrane). A helical transmembrane segment spans residues 163–183 (FGWEFAAVTALTMSAYTAFTI). Over 184–249 (WTTAWRTKFR…SSIKVATSLA (66 aa)) the chain is Mitochondrial matrix. Glutathione contacts are provided by residues 189-193 (RTKFR) and 252-255 (NSGQ). A helical membrane pass occupies residues 250-268 (FLNSGQNIIFSSALTIMMW). At 269-283 (LGAKGIVAGSLSVGD) the chain is on the mitochondrial intermembrane side. A helical membrane pass occupies residues 284-305 (LVLINQLVFQLSVPLNFLGSVY). A glutathione-binding site is contributed by glycine 302. Residues 306–603 (RELRQSLLDM…SEREAPVPVK (298 aa)) lie on the Mitochondrial matrix side of the membrane. Residues 345–581 (IRFDNVSFGY…NGLYTELWMA (237 aa)) enclose the ABC transporter domain. ATP is bound by residues tyrosine 354 and 378–389 (GPSGCGKSTLLR).

Belongs to the ABC transporter superfamily. ABCB family. Heavy Metal importer (TC 3.A.1.210) subfamily. As to quaternary structure, homodimer.

Its subcellular location is the mitochondrion inner membrane. In terms of biological role, performs an essential function in the generation of cytoplasmic iron-sulfur proteins by mediating the ATP-dependent export of Fe/S cluster precursors synthesized by NFS1 and other mitochondrial proteins. Hydrolyzes ATP. Binds glutathione and may function by transporting a glutathione-conjugated iron-sulfur compound. In Chaetomium globosum (strain ATCC 6205 / CBS 148.51 / DSM 1962 / NBRC 6347 / NRRL 1970) (Soil fungus), this protein is Iron-sulfur clusters transporter ATM1, mitochondrial.